We begin with the raw amino-acid sequence, 443 residues long: Putative type II methyltransferase M.BsuMIIP (443 aa).

The SAM-dependent MTase C5-type domain occupies 4–440 (LRVMSLFSGI…QELIHTYVNK (437 aa)). C78 is an active-site residue.

It belongs to the class I-like SAM-binding methyltransferase superfamily. C5-methyltransferase family.

The enzyme catalyses a 2'-deoxycytidine in DNA + S-adenosyl-L-methionine = a 5-methyl-2'-deoxycytidine in DNA + S-adenosyl-L-homocysteine + H(+). Functionally, a putative methylase, recognizes the double-stranded sequence 5'-GGCC-3', methylates C-?. There is no known cognate restriction enzyme. This chain is Putative type II methyltransferase M.BsuMIIP (mtbP), found in Bacillus subtilis (strain 168).